A 247-amino-acid polypeptide reads, in one-letter code: Germin-like protein 9-1 (247 aa).

The signal sequence occupies residues 1-25; that stretch reads MMMSSRSSVSLGVLLLLAVILSAGA. Residues 53-201 form the Cupin type-1 domain; it reads KNLVTGNSGD…SMHTDQATVD (149 aa). Mn(2+) is bound by residues His100, His102, and Glu107. Asn126 is a glycosylation site (N-linked (GlcNAc...) asparagine). His148 provides a ligand contact to Mn(2+). An N-linked (GlcNAc...) asparagine glycan is attached at Asn153.

It belongs to the germin family. Oligomer (believed to be a pentamer but probably hexamer).

It is found in the secreted. It localises to the extracellular space. The protein resides in the apoplast. In terms of biological role, may play a role in plant defense. Probably has no oxalate oxidase activity even if the active site is conserved. The sequence is that of Germin-like protein 9-1 from Oryza sativa subsp. japonica (Rice).